A 238-amino-acid chain; its full sequence is D-aminoacyl-tRNA deacylase (238 aa).

It belongs to the DtdA deacylase family. As to quaternary structure, monomer. Zn(2+) serves as cofactor.

The enzyme catalyses a D-aminoacyl-tRNA + H2O = a tRNA + a D-alpha-amino acid + H(+). It carries out the reaction glycyl-tRNA(Ala) + H2O = tRNA(Ala) + glycine + H(+). It catalyses the reaction D-tyrosyl-tRNA(Tyr) + H2O = D-tyrosine + tRNA(Tyr). D-aminoacyl-tRNA deacylase with broad substrate specificity. By recycling D-aminoacyl-tRNA to D-amino acids and free tRNA molecules, this enzyme counteracts the toxicity associated with the formation of D-aminoacyl-tRNA entities in vivo. Catalyzes the hydrolysis of D-tyrosyl-tRNA(Tyr). The chain is D-aminoacyl-tRNA deacylase from Saccharolobus solfataricus (strain ATCC 35092 / DSM 1617 / JCM 11322 / P2) (Sulfolobus solfataricus).